Consider the following 314-residue polypeptide: 4-hydroxy-3-methylbut-2-enyl diphosphate reductase (314 aa).

Residue Cys12 coordinates [4Fe-4S] cluster. (2E)-4-hydroxy-3-methylbut-2-enyl diphosphate is bound by residues His41 and His74. Dimethylallyl diphosphate is bound by residues His41 and His74. Isopentenyl diphosphate is bound by residues His41 and His74. Residue Cys96 coordinates [4Fe-4S] cluster. His124 provides a ligand contact to (2E)-4-hydroxy-3-methylbut-2-enyl diphosphate. His124 serves as a coordination point for dimethylallyl diphosphate. His124 lines the isopentenyl diphosphate pocket. Glu126 acts as the Proton donor in catalysis. Thr167 is a binding site for (2E)-4-hydroxy-3-methylbut-2-enyl diphosphate. Cys197 provides a ligand contact to [4Fe-4S] cluster. Residues Ser225, Ser226, Asn227, and Ser269 each coordinate (2E)-4-hydroxy-3-methylbut-2-enyl diphosphate. Residues Ser225, Ser226, Asn227, and Ser269 each coordinate dimethylallyl diphosphate. Residues Ser225, Ser226, Asn227, and Ser269 each contribute to the isopentenyl diphosphate site.

This sequence belongs to the IspH family. It depends on [4Fe-4S] cluster as a cofactor.

It catalyses the reaction isopentenyl diphosphate + 2 oxidized [2Fe-2S]-[ferredoxin] + H2O = (2E)-4-hydroxy-3-methylbut-2-enyl diphosphate + 2 reduced [2Fe-2S]-[ferredoxin] + 2 H(+). The enzyme catalyses dimethylallyl diphosphate + 2 oxidized [2Fe-2S]-[ferredoxin] + H2O = (2E)-4-hydroxy-3-methylbut-2-enyl diphosphate + 2 reduced [2Fe-2S]-[ferredoxin] + 2 H(+). It participates in isoprenoid biosynthesis; dimethylallyl diphosphate biosynthesis; dimethylallyl diphosphate from (2E)-4-hydroxy-3-methylbutenyl diphosphate: step 1/1. The protein operates within isoprenoid biosynthesis; isopentenyl diphosphate biosynthesis via DXP pathway; isopentenyl diphosphate from 1-deoxy-D-xylulose 5-phosphate: step 6/6. Functionally, catalyzes the conversion of 1-hydroxy-2-methyl-2-(E)-butenyl 4-diphosphate (HMBPP) into a mixture of isopentenyl diphosphate (IPP) and dimethylallyl diphosphate (DMAPP). Acts in the terminal step of the DOXP/MEP pathway for isoprenoid precursor biosynthesis. The protein is 4-hydroxy-3-methylbut-2-enyl diphosphate reductase of Histophilus somni (strain 2336) (Haemophilus somnus).